The following is a 371-amino-acid chain: tRNA-specific 2-thiouridylase MnmA (371 aa).

ATP contacts are provided by residues 13–20 (GMSGGVDS) and Met39. Residues 99–101 (NPD) form an interaction with target base in tRNA region. The active-site Nucleophile is the Cys104. Cys104 and Cys200 are disulfide-bonded. Position 128 (Gly128) interacts with ATP. Residues 150–152 (KDQ) form an interaction with tRNA region. Cys200 (cysteine persulfide intermediate) is an active-site residue. The interaction with tRNA stretch occupies residues 308–309 (RY).

It belongs to the MnmA/TRMU family.

The protein resides in the cytoplasm. The enzyme catalyses S-sulfanyl-L-cysteinyl-[protein] + uridine(34) in tRNA + AH2 + ATP = 2-thiouridine(34) in tRNA + L-cysteinyl-[protein] + A + AMP + diphosphate + H(+). Its function is as follows. Catalyzes the 2-thiolation of uridine at the wobble position (U34) of tRNA, leading to the formation of s(2)U34. In Bacillus thuringiensis (strain Al Hakam), this protein is tRNA-specific 2-thiouridylase MnmA.